The following is a 379-amino-acid chain: Mannitol-1-phosphate 5-dehydrogenase (379 aa).

Position 3-14 (alanine 3–glycine 14) interacts with NAD(+).

Belongs to the mannitol dehydrogenase family.

It carries out the reaction D-mannitol 1-phosphate + NAD(+) = beta-D-fructose 6-phosphate + NADH + H(+). The polypeptide is Mannitol-1-phosphate 5-dehydrogenase (Anoxybacillus flavithermus (strain DSM 21510 / WK1)).